The following is a 443-amino-acid chain: Probable D-serine dehydratase (443 aa).

The residue at position 116 (K116) is an N6-(pyridoxal phosphate)lysine.

Belongs to the serine/threonine dehydratase family. DsdA subfamily. Pyridoxal 5'-phosphate serves as cofactor.

The catalysed reaction is D-serine = pyruvate + NH4(+). The chain is Probable D-serine dehydratase from Bacillus cereus (strain B4264).